The following is a 405-amino-acid chain: Interferon alpha/beta receptor 1a (405 aa).

The signal sequence occupies residues 1–20 (MKVGFALVLLWSLPITNVLA). Residues 21-233 (ELPQPQNLTL…QTEGDTPYGQ (213 aa)) are Extracellular-facing. Fibronectin type-III domains follow at residues 22–123 (LPQP…IDAS) and 126–228 (PPSR…TEGD). N-linked (GlcNAc...) asparagine glycans are attached at residues Asn27 and Asn70. Intrachain disulfides connect Cys75–Cys83 and Cys201–Cys222. An N-linked (GlcNAc...) asparagine glycan is attached at Asn212. Residues 234 to 254 (IFLYFLVSMMVCFLLVLLSSY) traverse the membrane as a helical segment. Topologically, residues 255–405 (AFFRFYRGLK…LDEGVVDICV (151 aa)) are cytoplasmic. Residues 325–374 (TAPPSELEQDSGRRIRQDSGDSGIYSTEGGSAQQGRSGGEPIRRDQEVDS) form a disordered region. Residues 334 to 343 (DSGRRIRQDS) are compositionally biased toward basic and acidic residues. A compositionally biased stretch (polar residues) spans 348 to 359 (IYSTEGGSAQQG).

It belongs to the type II cytokine receptor family. In terms of assembly, heterodimer with IFNAR2; forming the receptor for type I interferon.

The protein resides in the cell membrane. Functionally, together with IFNAR2, forms the heterodimeric receptor for type I interferons (including interferons alpha, beta, epsilon, omega and kappa). Type I interferon binding activates the JAK-STAT signaling cascade, resulting in transcriptional activation or repression of interferon-regulated genes that encode the effectors of the interferon response. Mechanistically, type I interferon-binding brings the IFNAR1 and IFNAR2 subunits into close proximity with one another, driving their associated Janus kinases (JAKs) (TYK2 bound to IFNAR1 and JAK1 bound to IFNAR2) to cross-phosphorylate one another. The activated kinases phosphorylate specific tyrosine residues on the intracellular domains of IFNAR1 and IFNAR2, forming docking sites for the STAT transcription factors. STAT proteins are then phosphorylated by the JAKs, promoting their translocation into the nucleus to regulate expression of interferon-regulated genes. In Oncorhynchus mykiss (Rainbow trout), this protein is Interferon alpha/beta receptor 1a.